Reading from the N-terminus, the 96-residue chain is CRISPR-associated endoribonuclease Cas2 (96 aa).

Asp-8 provides a ligand contact to Mg(2+).

This sequence belongs to the CRISPR-associated endoribonuclease Cas2 protein family. In terms of assembly, homodimer, forms a heterotetramer with a Cas1 homodimer. It depends on Mg(2+) as a cofactor.

CRISPR (clustered regularly interspaced short palindromic repeat), is an adaptive immune system that provides protection against mobile genetic elements (viruses, transposable elements and conjugative plasmids). CRISPR clusters contain sequences complementary to antecedent mobile elements and target invading nucleic acids. CRISPR clusters are transcribed and processed into CRISPR RNA (crRNA). Functions as a ssRNA-specific endoribonuclease. Involved in the integration of spacer DNA into the CRISPR cassette. The chain is CRISPR-associated endoribonuclease Cas2 from Chlorobaculum tepidum (strain ATCC 49652 / DSM 12025 / NBRC 103806 / TLS) (Chlorobium tepidum).